Consider the following 530-residue polypeptide: UDP-glucuronosyltransferase 2A3 (530 aa).

Positions 1–23 (MAPGKLASAVLLLLLCCAGSGFC) are cleaved as a signal peptide. Topologically, residues 24–494 (GKVLVWPCEM…SWFQYHSLDV (471 aa)) are extracellular. The N-linked (GlcNAc...) asparagine glycan is linked to asparagine 316. Residues 495–515 (IGFLLACVASAILLVTKCCLF) form a helical membrane-spanning segment. The Cytoplasmic portion of the chain corresponds to 516–530 (SFQNFIKIGKRIKKE).

The protein belongs to the UDP-glycosyltransferase family. As to expression, specifically expressed in liver and small intestine.

It is found in the membrane. It carries out the reaction glucuronate acceptor + UDP-alpha-D-glucuronate = acceptor beta-D-glucuronoside + UDP + H(+). Its function is as follows. UDP-glucuronosyltransferases catalyze phase II biotransformation reactions in which lipophilic substrates are conjugated with glucuronic acid to increase water solubility and enhance excretion. They are of major importance in the conjugation and subsequent elimination of potentially toxic xenobiotics and endogenous compounds. The protein is UDP-glucuronosyltransferase 2A3 (UGT2A3) of Cavia porcellus (Guinea pig).